Reading from the N-terminus, the 903-residue chain is Protein translocase subunit SecA (903 aa).

ATP is bound by residues Q87, 105-109 (GEGKT), and D512. Residues 853 to 903 (KQQQLSHYEENALVTEDPNAPATAERKVGRNDPCPCGSGKKYKQCHGRLQS) are disordered. The Zn(2+) site is built by C886, C888, C897, and H898. Residues 892–903 (KKYKQCHGRLQS) show a composition bias toward basic residues.

It belongs to the SecA family. Monomer and homodimer. Part of the essential Sec protein translocation apparatus which comprises SecA, SecYEG and auxiliary proteins SecDF-YajC and YidC. Zn(2+) serves as cofactor.

It localises to the cell inner membrane. Its subcellular location is the cytoplasm. The catalysed reaction is ATP + H2O + cellular proteinSide 1 = ADP + phosphate + cellular proteinSide 2.. Part of the Sec protein translocase complex. Interacts with the SecYEG preprotein conducting channel. Has a central role in coupling the hydrolysis of ATP to the transfer of proteins into and across the cell membrane, serving both as a receptor for the preprotein-SecB complex and as an ATP-driven molecular motor driving the stepwise translocation of polypeptide chains across the membrane. This chain is Protein translocase subunit SecA, found in Serratia proteamaculans (strain 568).